A 150-amino-acid chain; its full sequence is UPF0756 membrane protein YE1142 (150 aa).

The next 4 helical transmembrane spans lie at 1 to 21 (MAALDPTLLILLVLAGLGIIS), 51 to 71 (YGLTIGILILTIGVMTPIASG), 88 to 108 (ILAIVVGVAVSWLGGRGVSLM), and 114 to 134 (VVAGLLVGTVLGVALFRGVPV).

Belongs to the UPF0756 family.

The protein resides in the cell membrane. This Yersinia enterocolitica serotype O:8 / biotype 1B (strain NCTC 13174 / 8081) protein is UPF0756 membrane protein YE1142.